Reading from the N-terminus, the 112-residue chain is Nitrogen regulatory protein GlnK1 (112 aa).

Thr-29 is a binding site for ADP. Thr-29 and Val-38 together coordinate ATP. 52-54 (IVD) contacts 2-oxoglutarate. ADP contacts are provided by residues Val-64, 88–90 (DGK), and 101–103 (RVR). Residues Val-64, 86 to 90 (PGDGK), and 101 to 103 (RVR) each bind ATP.

The protein belongs to the P(II) protein family. As to quaternary structure, homotrimer. Interacts and forms a complex with Amt1.

The protein resides in the cytoplasm. With respect to regulation, formation of the GlnK1/Amt1 complex is decreased in the presence of Mg-ATP or 2-oxoglutarate. The presence of both effectors abolishes the formation of the complex. Its function is as follows. Involved in the regulation of nitrogen metabolism. Regulates the activity of its targets by protein-protein interaction in response to the nitrogen status of the cell. Regulates the activity of the ammonia channel Amt1 via direct interaction. The polypeptide is Nitrogen regulatory protein GlnK1 (Methanocaldococcus jannaschii (strain ATCC 43067 / DSM 2661 / JAL-1 / JCM 10045 / NBRC 100440) (Methanococcus jannaschii)).